A 184-amino-acid polypeptide reads, in one-letter code: ATP synthase subunit b, chloroplastic (184 aa).

A helical membrane pass occupies residues 27–49 (LATNLINLSVVIGVLIFFGKGVL).

It belongs to the ATPase B chain family. In terms of assembly, F-type ATPases have 2 components, F(1) - the catalytic core - and F(0) - the membrane proton channel. F(1) has five subunits: alpha(3), beta(3), gamma(1), delta(1), epsilon(1). F(0) has four main subunits: a(1), b(1), b'(1) and c(10-14). The alpha and beta chains form an alternating ring which encloses part of the gamma chain. F(1) is attached to F(0) by a central stalk formed by the gamma and epsilon chains, while a peripheral stalk is formed by the delta, b and b' chains.

The protein resides in the plastid. It localises to the chloroplast thylakoid membrane. Its function is as follows. F(1)F(0) ATP synthase produces ATP from ADP in the presence of a proton or sodium gradient. F-type ATPases consist of two structural domains, F(1) containing the extramembraneous catalytic core and F(0) containing the membrane proton channel, linked together by a central stalk and a peripheral stalk. During catalysis, ATP synthesis in the catalytic domain of F(1) is coupled via a rotary mechanism of the central stalk subunits to proton translocation. In terms of biological role, component of the F(0) channel, it forms part of the peripheral stalk, linking F(1) to F(0). This Jasminum nudiflorum (Winter jasmine) protein is ATP synthase subunit b, chloroplastic.